Here is a 311-residue protein sequence, read N- to C-terminus: Cytosolic Fe-S cluster assembly factor Nubp1 homolog (311 aa).

Residues 1–21 (MQAPPPEHCPGVESEEAGKGS) are disordered. 4 residues coordinate [4Fe-4S] cluster: Cys9, Cys23, Cys26, and Cys32. 63-70 (GKGGVGKS) contributes to the ATP binding site. [4Fe-4S] cluster-binding residues include Cys240 and Cys243.

This sequence belongs to the Mrp/NBP35 ATP-binding proteins family. NUBP1/NBP35 subfamily. Heterotetramer of 2 Nubp1 and 2 Nubp2 chains. Requires [4Fe-4S] cluster as cofactor.

Its subcellular location is the cytoplasm. Functionally, component of the cytosolic iron-sulfur (Fe/S) protein assembly (CIA) machinery. Required for maturation of extramitochondrial Fe-S proteins. The Nubp1-Nubp2 heterotetramer forms a Fe-S scaffold complex, mediating the de novo assembly of an Fe-S cluster and its transfer to target apoproteins. This is Cytosolic Fe-S cluster assembly factor Nubp1 homolog from Drosophila melanogaster (Fruit fly).